Here is a 189-residue protein sequence, read N- to C-terminus: Peptidyl-tRNA hydrolase (189 aa).

Residue tyrosine 14 participates in tRNA binding. The active-site Proton acceptor is histidine 19. Residues tyrosine 64, asparagine 66, and asparagine 112 each contribute to the tRNA site.

It belongs to the PTH family. Monomer.

It localises to the cytoplasm. It carries out the reaction an N-acyl-L-alpha-aminoacyl-tRNA + H2O = an N-acyl-L-amino acid + a tRNA + H(+). Hydrolyzes ribosome-free peptidyl-tRNAs (with 1 or more amino acids incorporated), which drop off the ribosome during protein synthesis, or as a result of ribosome stalling. In terms of biological role, catalyzes the release of premature peptidyl moieties from peptidyl-tRNA molecules trapped in stalled 50S ribosomal subunits, and thus maintains levels of free tRNAs and 50S ribosomes. This is Peptidyl-tRNA hydrolase from Clostridium botulinum (strain 657 / Type Ba4).